Consider the following 150-residue polypeptide: Large ribosomal subunit protein bL9 (150 aa).

This sequence belongs to the bacterial ribosomal protein bL9 family.

Binds to the 23S rRNA. The sequence is that of Large ribosomal subunit protein bL9 from Streptococcus pyogenes serotype M18 (strain MGAS8232).